The sequence spans 1344 residues: Eukaryotic translation initiation factor 3 subunit A (1344 aa).

Residue lysine 68 is modified to N6-acetyllysine. The stretch at 82 to 120 forms a coiled coil; that stretch reads NIKSLEDVVRAYLKLAEEKTEAAKEESQQMVLDIEDLDN. The PCI domain occupies 315 to 498; it reads MQRMSTRVLL…RTLSFGSDLN (184 aa). A phosphoserine mark is found at serine 492 and serine 584. The interaction with EIF3B stretch occupies residues 664–835; the sequence is LDPDFIMAKQ…REERERAERA (172 aa). 3 disordered regions span residues 807–844, 866–1240, and 1252–1344; these read YREKEEEEQRRAEEQMLKEREERERAERAKREEELREY, EERE…DRDD, and DLRD…TVRR. 4 stretches are compositionally biased toward basic and acidic residues: residues 866–1126, 1138–1240, 1252–1292, and 1300–1333; these read EERE…DDAR, GWRE…DRDD, DLRD…DPPR, and SRDREREREREGEKEKASWRAEKDRESLRRTKNE. Serine 895 is modified (phosphoserine). The stretch at 924-931 is one 1; truncated repeat; the sequence is DDERPHRR. The segment at 924–1133 is 21 X 10 AA approximate tandem repeats of [DA]-[DE]-[ED]-R-[PLIGFSV]-[RPS]-[RW]-[RL]-[GNIHT]-[DGLPTAM]; that stretch reads DDERPHRRDE…DARPGPWRPF (210 aa). Copy 2 of the repeat occupies 932–941; that stretch reads DEDRLRRLGG. The stretch at 942-951 is one 3; approximate repeat; it reads DDEERESSLR. At serine 949 the chain carries Phosphoserine. A run of 17 repeats spans residues 953-962, 963-972, 973-982, 983-992, 993-1002, 1003-1012, 1013-1022, 1023-1032, 1033-1042, 1043-1052, 1054-1063, 1064-1073, 1074-1083, 1084-1093, 1094-1103, 1104-1113, and 1114-1123. Serine 1028 carries the post-translational modification Phosphoserine. The 21; approximate repeat unit spans residues 1124–1133; it reads DARPGPWRPF. Residues serine 1149, serine 1159, and serine 1223 each carry the phosphoserine modification. A phosphoserine mark is found at serine 1300 and serine 1326.

Belongs to the eIF-3 subunit A family. In terms of assembly, interacts with KRT7. Component of the eukaryotic translation initiation factor 3 (eIF-3) complex, which is composed of 13 subunits: EIF3A, EIF3B, EIF3C, EIF3D, EIF3E, EIF3F, EIF3G, EIF3H, EIF3I, EIF3J, EIF3K, EIF3L and EIF3M. The eIF-3 complex appears to include 3 stable modules: module A is composed of EIF3A, EIF3B, EIF3G and EIF3I; module B is composed of EIF3F, EIF3H, and EIF3M; and module C is composed of EIF3C, EIF3D, EIF3E, EIF3L and EIF3K. EIF3C of module C binds EIF3B of module A and EIF3H of module B, thereby linking the three modules. EIF3J is a labile subunit that binds to the eIF-3 complex via EIF3B. The eIF-3 complex may interact with RPS6KB1 under conditions of nutrient depletion. Mitogenic stimulation may lead to binding and activation of a complex composed of MTOR and RPTOR, leading to phosphorylation and release of RPS6KB1 and binding of EIF4B to eIF-3. Interacts with EIF4G1 and PIWIL2. Phosphorylated. Phosphorylation is enhanced upon serum stimulation.

It is found in the cytoplasm. The protein resides in the cytoskeleton. The protein localises to the microtubule organizing center. It localises to the centrosome. Its subcellular location is the nucleus. RNA-binding component of the eukaryotic translation initiation factor 3 (eIF-3) complex, which is required for several steps in the initiation of protein synthesis. The eIF-3 complex associates with the 40S ribosome and facilitates the recruitment of eIF-1, eIF-1A, eIF-2:GTP:methionyl-tRNAi and eIF-5 to form the 43S pre-initiation complex (43S PIC). The eIF-3 complex stimulates mRNA recruitment to the 43S PIC and scanning of the mRNA for AUG recognition. The eIF-3 complex is also required for disassembly and recycling of post-termination ribosomal complexes and subsequently prevents premature joining of the 40S and 60S ribosomal subunits prior to initiation. The eIF-3 complex specifically targets and initiates translation of a subset of mRNAs involved in cell proliferation, including cell cycling, differentiation and apoptosis, and uses different modes of RNA stem-loop binding to exert either translational activation or repression. The protein is Eukaryotic translation initiation factor 3 subunit A (Eif3a) of Mus musculus (Mouse).